The sequence spans 217 residues: Pyrophosphatase PpaX (217 aa).

Asp-11 functions as the Nucleophile in the catalytic mechanism.

This sequence belongs to the HAD-like hydrolase superfamily. PpaX family. Requires Mg(2+) as cofactor.

It carries out the reaction diphosphate + H2O = 2 phosphate + H(+). In terms of biological role, hydrolyzes pyrophosphate formed during P-Ser-HPr dephosphorylation by HPrK/P. Might play a role in controlling the intracellular pyrophosphate pool. This is Pyrophosphatase PpaX from Listeria welshimeri serovar 6b (strain ATCC 35897 / DSM 20650 / CCUG 15529 / CIP 8149 / NCTC 11857 / SLCC 5334 / V8).